The sequence spans 331 residues: MNITILGAGAWGTALAMSLADRHSVMLWGRDAAVMQEAEQRRENTVYLPGFRLPDSLSLSSDFSAAIAHVGTDGLLLVATSLAGLRPLAMQLQPYAIPNIVWLCKGFEADTHLLPHQIVREVLGNDIPAGALSGPSFAQEVAQGLPCALAIASDNAALRELVVSAVHGPSMRIYSTDDVIGVEVGGAVKNILAIATGIIDGLKLGMNARAALITRGLVEITRFGVALGGRTETFMGLAGMGDLILTCTGDLSRNRKVGLGLAQGKKLEQIVTELGHVAEGVRCAQAVRSLAAERGIDMPITNAVAAVLFDGDLPREMVGRLLARDARNEMA.

Residues W11, R30, and K105 each coordinate NADPH. 3 residues coordinate sn-glycerol 3-phosphate: K105, G134, and S136. A138 lines the NADPH pocket. Sn-glycerol 3-phosphate is bound by residues K189, D242, S252, R253, and N254. The active-site Proton acceptor is the K189. R253 lines the NADPH pocket. Residues V277 and E279 each contribute to the NADPH site.

It belongs to the NAD-dependent glycerol-3-phosphate dehydrogenase family.

The protein resides in the cytoplasm. The enzyme catalyses sn-glycerol 3-phosphate + NAD(+) = dihydroxyacetone phosphate + NADH + H(+). The catalysed reaction is sn-glycerol 3-phosphate + NADP(+) = dihydroxyacetone phosphate + NADPH + H(+). It functions in the pathway membrane lipid metabolism; glycerophospholipid metabolism. Catalyzes the reduction of the glycolytic intermediate dihydroxyacetone phosphate (DHAP) to sn-glycerol 3-phosphate (G3P), the key precursor for phospholipid synthesis. The polypeptide is Glycerol-3-phosphate dehydrogenase [NAD(P)+] (Herminiimonas arsenicoxydans).